The chain runs to 276 residues: MVKGPGLYSDIGKKARDLLYRDYVSDHKFTVTTYSTTGVAITASGLKKGELFLADVSTQLKNKNITTDVKVDTNSNVYTTITVDEPAPGLKTIFSFVVPDQKSGKVELQYLHEYAGINTSIGLTASPLVNFSGVAGNNTVALGTDLSFDTATGNFTKCNAGLSFSSSDLIASLALNDKGDTVSASYYHTVKPVTNTAVGAELTHSFSSNENTLTIGTQHLLDPLTTVKARVNSYGKASALIQHEWRPKSLFTISGEVDTRAIEKSAKIGLAVALKP.

Belongs to the eukaryotic mitochondrial porin (TC 1.B.8.1) family.

It is found in the mitochondrion outer membrane. In terms of biological role, forms a channel through the cell membrane that allows diffusion of small hydrophilic molecules. The channel adopts an open conformation at low or zero membrane potential and a closed conformation at potentials above 30-40 mV. The open state has a weak anion selectivity whereas the closed state is cation-selective. This chain is Mitochondrial outer membrane protein porin of 36 kDa, found in Solanum tuberosum (Potato).